The primary structure comprises 452 residues: Heat shock protein 83 (452 aa).

Arg124 serves as a coordination point for ATP. The short motif at 448 to 452 is the TPR repeat-binding element; that stretch reads MEQVD.

It belongs to the heat shock protein 90 family. As to quaternary structure, homodimer.

Its subcellular location is the cytoplasm. Functionally, molecular chaperone that promotes the maturation, structural maintenance and proper regulation of specific target proteins involved for instance in cell cycle control and signal transduction. Undergoes a functional cycle that is linked to its ATPase activity. This cycle probably induces conformational changes in the client proteins, thereby causing their activation. Interacts dynamically with various co-chaperones that modulate its substrate recognition, ATPase cycle and chaperone function. The chain is Heat shock protein 83 (HSP83) from Leishmania donovani.